A 309-amino-acid chain; its full sequence is DSC E3 ubiquitin ligase complex subunit C (309 aa).

Asn-61 is a glycosylation site (N-linked (GlcNAc...) asparagine). Disordered stretches follow at residues 88–110 (LPPS…GKGK) and 148–177 (EQAD…FDRL). The next 2 helical transmembrane spans lie at 257–277 (DDML…AMWL) and 289–309 (GLAV…RIMN).

It belongs to the dsc3 family. As to quaternary structure, component of the DSC E3 ubiquitin ligase complex composed of dscA, dscB, dscC and dscD.

It is found in the endoplasmic reticulum membrane. The protein operates within protein modification; protein ubiquitination. Component of the DSC E3 ubiquitin ligase complex which is required for the srbA transcriptional activator proteolytic cleavage to release the soluble transcription factor from the membrane in low oxygen or sterol conditions. Required for growth during hypoxia and triazole drug susceptibility, as well as for virulence in a murine model of invasive pulmonary aspergillosis (IPA). The protein is DSC E3 ubiquitin ligase complex subunit C of Aspergillus fumigatus (strain ATCC MYA-4609 / CBS 101355 / FGSC A1100 / Af293) (Neosartorya fumigata).